The primary structure comprises 400 residues: Transposase for insertion sequence element ISRM3 (400 aa).

This sequence belongs to the transposase mutator family.

In terms of biological role, required for the transposition of the insertion element. The polypeptide is Transposase for insertion sequence element ISRM3 (Rhizobium meliloti (strain 1021) (Ensifer meliloti)).